The primary structure comprises 172 residues: ATP synthase subunit b (172 aa).

The helical transmembrane segment at 11–30 (LIAQIINFVIVLWVLNRFAF) threads the bilayer.

This sequence belongs to the ATPase B chain family. As to quaternary structure, F-type ATPases have 2 components, F(1) - the catalytic core - and F(0) - the membrane proton channel. F(1) has five subunits: alpha(3), beta(3), gamma(1), delta(1), epsilon(1). F(0) has three main subunits: a(1), b(2) and c(10-14). The alpha and beta chains form an alternating ring which encloses part of the gamma chain. F(1) is attached to F(0) by a central stalk formed by the gamma and epsilon chains, while a peripheral stalk is formed by the delta and b chains.

It localises to the cell inner membrane. F(1)F(0) ATP synthase produces ATP from ADP in the presence of a proton or sodium gradient. F-type ATPases consist of two structural domains, F(1) containing the extramembraneous catalytic core and F(0) containing the membrane proton channel, linked together by a central stalk and a peripheral stalk. During catalysis, ATP synthesis in the catalytic domain of F(1) is coupled via a rotary mechanism of the central stalk subunits to proton translocation. Functionally, component of the F(0) channel, it forms part of the peripheral stalk, linking F(1) to F(0). The sequence is that of ATP synthase subunit b from Methylacidiphilum infernorum (isolate V4) (Methylokorus infernorum (strain V4)).